Consider the following 459-residue polypeptide: Ribulose bisphosphate carboxylase large chain (459 aa).

Residue Lys-4 is modified to N6,N6,N6-trimethyllysine. Substrate-binding residues include Asn-113 and Thr-163. Lys-165 functions as the Proton acceptor in the catalytic mechanism. Residue Lys-167 participates in substrate binding. Lys-191, Asp-193, and Glu-194 together coordinate Mg(2+). The residue at position 191 (Lys-191) is an N6-carboxylysine. His-284 functions as the Proton acceptor in the catalytic mechanism. The substrate site is built by Arg-285, His-317, and Ser-369.

It belongs to the RuBisCO large chain family. Type I subfamily. In terms of assembly, heterohexadecamer of 8 large chains and 8 small chains; disulfide-linked. The disulfide link is formed within the large subunit homodimers. Requires Mg(2+) as cofactor. The disulfide bond which can form in the large chain dimeric partners within the hexadecamer appears to be associated with oxidative stress and protein turnover.

It is found in the plastid. The protein resides in the chloroplast. It catalyses the reaction 2 (2R)-3-phosphoglycerate + 2 H(+) = D-ribulose 1,5-bisphosphate + CO2 + H2O. It carries out the reaction D-ribulose 1,5-bisphosphate + O2 = 2-phosphoglycolate + (2R)-3-phosphoglycerate + 2 H(+). Functionally, ruBisCO catalyzes two reactions: the carboxylation of D-ribulose 1,5-bisphosphate, the primary event in carbon dioxide fixation, as well as the oxidative fragmentation of the pentose substrate in the photorespiration process. Both reactions occur simultaneously and in competition at the same active site. The chain is Ribulose bisphosphate carboxylase large chain from Parnassia fimbriata (Fringed grass-of-Parnassus).